The following is a 297-amino-acid chain: F-box only protein 2 (297 aa).

The interval 1-47 is disordered; sequence MDGDGDPESVSHPEEASPEEQPEEAGAEASAEEEQLREAEEEEEAEA. The segment covering 16–47 has biased composition (acidic residues); it reads ASPEEQPEEAGAEASAEEEQLREAEEEEEAEA. An F-box domain is found at 48–95; that stretch reads VEYLAELPEPLLLRVLAELPATELVQACRLVCLRWKELVDGAPLWLLK. Ser106 carries the post-translational modification Phosphoserine. An FBA domain is found at 117 to 297; that stretch reads FYFLSKRRRN…VTNSSVWVEP (181 aa). Residues 214–216 and 279–280 each bind a carbohydrate; these read RTD and YW.

Component of the SCF(FBXO2) complex consisting of CUL1, RBX1, SKP1 and FBXO2. Predominantly detected as heterodimer with SKP1; the heterodimer with SKP1 is not part of the SCF(FBXO2) complex. In terms of tissue distribution, detected in brain and cochlea, in epithelial support cells and hair cells of the organ of Corti (at protein level).

Its subcellular location is the cytoplasm. The protein localises to the microsome membrane. Its pathway is protein modification; protein ubiquitination. Its function is as follows. Substrate recognition component of a SCF (SKP1-CUL1-F-box protein) E3 ubiquitin-protein ligase complex that mediates the ubiquitination and subsequent proteasomal degradation of target proteins. Involved in the endoplasmic reticulum-associated degradation pathway (ERAD) for misfolded lumenal proteins by recognizing and binding sugar chains on unfolded glycoproteins that are retrotranslocated into the cytosol and promoting their ubiquitination and subsequent degradation. Prevents formation of cytosolic aggregates of unfolded glycoproteins that have been retrotranslocated into the cytosol. Able to recognize and bind denatured glycoproteins, preferentially those of the high-mannose type. The chain is F-box only protein 2 (Fbxo2) from Mus musculus (Mouse).